Here is a 90-residue protein sequence, read N- to C-terminus: Translation initiation factor IF-1 (90 aa).

The S1-like domain maps to 7 to 76; sequence KEDVIRMEGT…TRGRIVYRKK (70 aa).

Belongs to the IF-1 family. In terms of assembly, component of the 30S ribosomal translation pre-initiation complex which assembles on the 30S ribosome in the order IF-2 and IF-3, IF-1 and N-formylmethionyl-tRNA(fMet); mRNA recruitment can occur at any time during PIC assembly.

It localises to the cytoplasm. Its function is as follows. One of the essential components for the initiation of protein synthesis. Stabilizes the binding of IF-2 and IF-3 on the 30S subunit to which N-formylmethionyl-tRNA(fMet) subsequently binds. Helps modulate mRNA selection, yielding the 30S pre-initiation complex (PIC). Upon addition of the 50S ribosomal subunit IF-1, IF-2 and IF-3 are released leaving the mature 70S translation initiation complex. The protein is Translation initiation factor IF-1 of Fervidobacterium nodosum (strain ATCC 35602 / DSM 5306 / Rt17-B1).